The primary structure comprises 72 residues: Protein kish-A (72 aa).

The first 26 residues, 1–26 (MSAIFNFQSLLIVILLLICTCAYLRS), serve as a signal peptide directing secretion. Over 27-53 (LVPNLLDKNKTGVLGIFWKCARIGERK) the chain is Extracellular. N-linked (GlcNAc...) asparagine glycosylation is present at Asn35. Residues 54 to 71 (SPYVAVCCVVMAFSILFM) traverse the membrane as a helical segment. Residue Gln72 is a topological domain, cytoplasmic.

This sequence belongs to the KISH family.

The protein resides in the golgi apparatus membrane. Functionally, involved in the early part of the secretory pathway. The protein is Protein kish-A (tmem167a) of Xenopus laevis (African clawed frog).